A 414-amino-acid chain; its full sequence is Procollagen C-endopeptidase enhancer 2 (414 aa).

The first 22 residues, 1–22 (MGGASACIPLCLLLATARMARP), serve as a signal peptide directing secretion. 7 cysteine pairs are disulfide-bonded: C32/C58, C85/C106, C153/C180, C207/C230, C296/C363, C300/C366, and C311/C414. 2 CUB domains span residues 32-143 (CGGI…YSAA) and 153-267 (CGGR…YKFR). Positions 296 to 414 (CQQKCRRMGT…PMNALKNKQC (119 aa)) constitute an NTR domain. N354 carries an N-linked (GlcNAc...) asparagine glycan.

Interacts with heparin with high affinity, and type I or II collagen. In terms of processing, O-glycosylated; contains sialic acid.

It localises to the secreted. Its function is as follows. Binds to the C-terminal propeptide of types I and II procollagens and may enhance the cleavage of that propeptide by BMP1. The chain is Procollagen C-endopeptidase enhancer 2 (Pcolce2) from Mus musculus (Mouse).